The chain runs to 266 residues: MSGPILVFDSGVGGLSILDEIRRVLPDQNYCYLFDNARLPYGELEEQELIDGCEALITATVAQLGASLVVIACNTASTLVLPVLREALTIPVVGVVPAIKPAALYSQAKHIGLLATPGTIKRSYTHSLIQEFAANCQVELYGSSELVLLAERKASGKQILQGEIAQLLSPIKVSGIDTLVLGCTHFPILKDEIQQYLGDGVLLLDSGKAVAARVSTLIKEESTLNKRQRKGHSKEMIALYTSEVGEGLKKLLAEFGFSTYSKAQTG.

Residues Asp-9–Ser-10 and Tyr-41–Gly-42 each bind substrate. The Proton donor/acceptor role is filled by Cys-73. Residue Asn-74–Thr-75 participates in substrate binding. The active-site Proton donor/acceptor is Cys-183. Thr-184 to His-185 serves as a coordination point for substrate.

The protein belongs to the aspartate/glutamate racemases family.

It catalyses the reaction L-glutamate = D-glutamate. It functions in the pathway cell wall biogenesis; peptidoglycan biosynthesis. Functionally, provides the (R)-glutamate required for cell wall biosynthesis. The chain is Glutamate racemase from Shewanella woodyi (strain ATCC 51908 / MS32).